Consider the following 30-residue polypeptide: Rothein 3.4 (30 aa).

Residue L30 is modified to Leucine amide.

Belongs to the frog skin active peptide (FSAP) family. Rothein subfamily. Expressed by the skin dorsal glands.

Its subcellular location is the secreted. In terms of biological role, lacks antimicrobial activity. Does not inhibit the formation of NO by neuronal nitric oxide. This is Rothein 3.4 from Litoria rothii (Roth's tree frog).